A 111-amino-acid polypeptide reads, in one-letter code: Secreted RxLR effector protein 159 (111 aa).

The signal sequence occupies residues methionine 1–alanine 21. A RxLR-dEER motif is present at residues arginine 50–arginine 71. A glycan (N-linked (GlcNAc...) asparagine) is linked at asparagine 81.

This sequence belongs to the RxLR effector family.

It localises to the secreted. The protein resides in the host nucleus. Its subcellular location is the host cytoplasm. Functionally, secreted effector that completely suppresses the host cell death induced by cell death-inducing proteins. The protein is Secreted RxLR effector protein 159 of Plasmopara viticola (Downy mildew of grapevine).